Consider the following 405-residue polypeptide: 4-hydroxy-3-methylbut-2-en-1-yl diphosphate synthase (flavodoxin) (405 aa).

Cys-297, Cys-300, Cys-343, and Glu-350 together coordinate [4Fe-4S] cluster.

This sequence belongs to the IspG family. The cofactor is [4Fe-4S] cluster.

The catalysed reaction is (2E)-4-hydroxy-3-methylbut-2-enyl diphosphate + oxidized [flavodoxin] + H2O + 2 H(+) = 2-C-methyl-D-erythritol 2,4-cyclic diphosphate + reduced [flavodoxin]. It functions in the pathway isoprenoid biosynthesis; isopentenyl diphosphate biosynthesis via DXP pathway; isopentenyl diphosphate from 1-deoxy-D-xylulose 5-phosphate: step 5/6. In terms of biological role, converts 2C-methyl-D-erythritol 2,4-cyclodiphosphate (ME-2,4cPP) into 1-hydroxy-2-methyl-2-(E)-butenyl 4-diphosphate. The chain is 4-hydroxy-3-methylbut-2-en-1-yl diphosphate synthase (flavodoxin) from Francisella tularensis subsp. tularensis (strain FSC 198).